Here is a 208-residue protein sequence, read N- to C-terminus: Orotidine 5'-phosphate decarboxylase (208 aa).

Substrate-binding positions include D7, K29, 57-66, S109, 162-172, G185, and R186; these read DLKLADIPNT and PGIGAQGGKAK. K59 acts as the Proton donor in catalysis.

It belongs to the OMP decarboxylase family. Type 1 subfamily. In terms of assembly, homodimer.

The enzyme catalyses orotidine 5'-phosphate + H(+) = UMP + CO2. Its pathway is pyrimidine metabolism; UMP biosynthesis via de novo pathway; UMP from orotate: step 2/2. In terms of biological role, catalyzes the decarboxylation of orotidine 5'-monophosphate (OMP) to uridine 5'-monophosphate (UMP). This chain is Orotidine 5'-phosphate decarboxylase (pyrF), found in Pyrococcus horikoshii (strain ATCC 700860 / DSM 12428 / JCM 9974 / NBRC 100139 / OT-3).